An 807-amino-acid chain; its full sequence is MAVAHLACDSQGSVVDLSGQGLQKLSPTLPFGNDTQTLILDKNQIIKLEHVEKCRNLVQLSVANNRLVRMMGVAKLIHLRVLNLPHNSIGYVEGLKDLVHLEWINLAGNNLKIIDQINSSTSLQHLDLSDNNISQIGDLSKLKSLKTLLLHGNNIASLRAASACLPQSLTILSLAENEIRDLNEVAFLAGLVDLEQLSIMNNPCVMATPSIPGFDYRPFIVSWCLNLKVLDGYVVSQKESLKAEWLYSQGKGRSYRLGQHIPLVQYLATVCPLTSAHGLQTEEDAKLDKILSKQRLHQKQLLHQTRSDGYLTSSTPNKRLPLSTEHHSPTHVLQTEPTVQVNNWLRSSSSEDHSYAVRNICSSPFGPPHYSSLYMEDIQTDEDKLNCSLLSSESTFMPVAPGLSPVSPTVELRVPAIKADLPVNETVIEFNKDHTELPPSETPEKPKLIPGLSAMQDDKSCCVYPVIKDENVTENIINCETAVSMESTQTSNGPTCHNLIMNCKQASVLDQDVNHINKISKAATKLQSCWRGFYARKYNPKVKDVCYEIRLSRMQEHIVFLTEEVIRLRKEKEEDRIQRILQGEAVRYLWEQVQAIQQWQNTVKLQTANSSENDLPSASNSKHANPALEELPSSPEKLNRKASPDIPDSGFHSVILNHCTMGNTEKNSSEESEYSQPSLDTGRHYNDKVPDSPADQDLTREEQSQSSKDSFTSEQDSSLLQQYLRSVEQLDETADNTSYSERTEESRPEITTCSDNSDLSCSISHFLPENSKQENIDIHSNLPSIDDGHNTPIPCDSSLLVPQPDLV.

7 LRR repeats span residues 34-55 (DTQT…EKCR), 56-77 (NLVQ…AKLI), 78-99 (HLRV…KDLV), 100-121 (HLEW…NSST), 122-143 (SLQH…SKLK), 144-165 (SLKT…SACL), and 168-189 (SLTI…AFLA). One can recognise an LRRCT domain in the interval 208-246 (TPSIPGFDYRPFIVSWCLNLKVLDGYVVSQKESLKAEWL). The tract at residues 306–330 (RSDGYLTSSTPNKRLPLSTEHHSPT) is disordered. The 30-residue stretch at 519–548 (ISKAATKLQSCWRGFYARKYNPKVKDVCYE) folds into the IQ domain. The span at 607–623 (TANSSENDLPSASNSKH) shows a compositional bias: polar residues. Residues 607 to 756 (TANSSENDLP…RPEITTCSDN (150 aa)) form a disordered region. Residues 681–690 (TGRHYNDKVP) show a composition bias toward basic and acidic residues. Residues 704-724 (SQSSKDSFTSEQDSSLLQQYL) show a composition bias toward polar residues.

It is found in the cytoplasm. The protein localises to the cytoskeleton. It localises to the microtubule organizing center. The protein resides in the centrosome. In terms of biological role, acts as a key negative regulator of ciliogenesis in collaboration with ccp110 by capping the mother centriole thereby preventing cilia formation. Required for recruitment of ccp110 to the centrosome. The polypeptide is Centrosomal protein of 97 kDa (cep97) (Xenopus laevis (African clawed frog)).